Consider the following 261-residue polypeptide: Glucose 1-dehydrogenase (261 aa).

11–35 is a binding site for NADP(+); the sequence is AITGAASGLGKAMAIRFGKEQAKVV. Position 145 (serine 145) interacts with substrate. Tyrosine 158 functions as the Proton acceptor in the catalytic mechanism.

Belongs to the short-chain dehydrogenases/reductases (SDR) family. As to quaternary structure, homotetramer.

The catalysed reaction is D-glucose + NAD(+) = D-glucono-1,5-lactone + NADH + H(+). It catalyses the reaction D-glucose + NADP(+) = D-glucono-1,5-lactone + NADPH + H(+). The polypeptide is Glucose 1-dehydrogenase (gdh) (Bacillus subtilis (strain 168)).